The sequence spans 311 residues: DNA-directed RNA polymerase subunit alpha (311 aa).

Residues 1 to 227 are alpha N-terminal domain (alpha-NTD); the sequence is MAQFQIECVE…NLFCSLRNLD (227 aa). The segment at 242–311 is alpha C-terminal domain (alpha-CTD); that stretch reads ISQVLIEELQ…GISLPKEKTD (70 aa).

This sequence belongs to the RNA polymerase alpha chain family. As to quaternary structure, in plastids the minimal PEP RNA polymerase catalytic core is composed of four subunits: alpha, beta, beta', and beta''. When a (nuclear-encoded) sigma factor is associated with the core the holoenzyme is formed, which can initiate transcription.

It is found in the plastid. It localises to the chloroplast. The catalysed reaction is RNA(n) + a ribonucleoside 5'-triphosphate = RNA(n+1) + diphosphate. DNA-dependent RNA polymerase catalyzes the transcription of DNA into RNA using the four ribonucleoside triphosphates as substrates. This chain is DNA-directed RNA polymerase subunit alpha, found in Porphyra purpurea (Red seaweed).